The primary structure comprises 524 residues: MAVTSPWFRAVVSAAQMQEIENWLFTQGMPVAALMEKAALQTAQRLLTLYPLSTYPRIGVVVGPGHNGGDGLVVARELKLQGYQVQVLQPLDKLKPLTQNHVDYGKSLGIPWVDGVQALAHCDLIIDALFGVGLTRLITGAIADLITTINNLPIPVVSIDLPSGIETDTGEILGVAVEADRSFCLGLWKRAYFQDRALAHLGQTELLGIGLPPQAIANVLGEVWPVQVLGADQAQQTLPLSRPLVTHKYQQGHLLLICGSQQYAGGALLTTLGARASGVGMVTVAVPMGIKALLHSQCPEVLVKGLLETPSGAIAGLGNLDLSRYSAVALGPGLGSDVGPLVEEVLSVNCPLILDADGLNQLAQQQLLPLLAVRTAPTVLTPHGGEFKRLFPDIDQGDRLTAVQTAAAMCQATVLLKGAKTVIASPTGPTWAIKDSTPALARGGSGDVLTGLMGGILAQPEKFDLAQRVATAAWWHAQAGILASQQRTILGVDAQHLAEYLIPACRQWLGPNVANWPANLSHSS.

The interval 1–223 (MAVTSPWFRA…QAIANVLGEV (223 aa)) is NAD(P)H-hydrate epimerase. The region spanning 17–217 (MQEIENWLFT…GIGLPPQAIA (201 aa)) is the YjeF N-terminal domain. An NADPHX 1; for epimerase activity region spans residues 66-70 (HNGGD). K(+) is bound by residues N67 and D127. Residues 131 to 137 (GVGLTRL) form an NADPHX 1; for epimerase activity region. D160 serves as a coordination point for (6S)-NADPHX. S163 is a K(+) binding site. The 278-residue stretch at 231–508 (ADQAQQTLPL…EYLIPACRQW (278 aa)) folds into the YjeF C-terminal domain. The tract at residues 231-524 (ADQAQQTLPL…NWPANLSHSS (294 aa)) is ADP-dependent (S)-NAD(P)H-hydrate dehydratase. G333 is a binding site for (6S)-NADPHX. Residues 383–389 (HGGEFKR) form an NADPHX 2; for dehydratase activity region. Residues 417–421 (KGAKT) and 437–446 (TPALARGGSG) each bind ADP. D447 is a (6S)-NADPHX binding site.

It in the N-terminal section; belongs to the NnrE/AIBP family. The protein in the C-terminal section; belongs to the NnrD/CARKD family. K(+) serves as cofactor.

The catalysed reaction is (6S)-NADHX + ADP = AMP + phosphate + NADH + H(+). It catalyses the reaction (6S)-NADPHX + ADP = AMP + phosphate + NADPH + H(+). The enzyme catalyses (6R)-NADHX = (6S)-NADHX. It carries out the reaction (6R)-NADPHX = (6S)-NADPHX. Its function is as follows. Bifunctional enzyme that catalyzes the epimerization of the S- and R-forms of NAD(P)HX and the dehydration of the S-form of NAD(P)HX at the expense of ADP, which is converted to AMP. This allows the repair of both epimers of NAD(P)HX, a damaged form of NAD(P)H that is a result of enzymatic or heat-dependent hydration. The chain is Bifunctional NAD(P)H-hydrate repair enzyme Nnr (nnr) from Synechocystis sp. (strain ATCC 27184 / PCC 6803 / Kazusa).